A 387-amino-acid chain; its full sequence is Alanine racemase (387 aa).

K38 functions as the Proton acceptor; specific for D-alanine in the catalytic mechanism. The residue at position 38 (K38) is an N6-(pyridoxal phosphate)lysine. Substrate is bound at residue R136. Y267 acts as the Proton acceptor; specific for L-alanine in catalysis. Position 315 (M315) interacts with substrate.

This sequence belongs to the alanine racemase family. It depends on pyridoxal 5'-phosphate as a cofactor.

The enzyme catalyses L-alanine = D-alanine. The protein operates within amino-acid biosynthesis; D-alanine biosynthesis; D-alanine from L-alanine: step 1/1. Catalyzes the interconversion of L-alanine and D-alanine. May also act on other amino acids. In Clostridium novyi (strain NT), this protein is Alanine racemase (alr).